Consider the following 381-residue polypeptide: Endophilin-A homolog (381 aa).

The membrane-binding amphipathic helix stretch occupies residues 1 to 21 (MSLSGLRKQFNKANQYLSETM). The BAR domain occupies 18–247 (SETMGAAEPT…LGHRIKDAAA (230 aa)). Residues 170–238 (CKKRQQRRDD…QCLENLQQQL (69 aa)) adopt a coiled-coil conformation. Residues 246–323 (AARPREEHVP…PPPLSQQQKP (78 aa)) are disordered. Residues 260–271 (ANESRTPRSSFR) show a composition bias toward polar residues. Residues 305 to 317 (YQGPPPGGLPPPL) are compositionally biased toward pro residues. Positions 320–379 (QQKPQCRALFDFDAQSEGELDFKEGTLIELVSQIDENWYEGRVNGKTGLFPVTYVQVLVP) constitute an SH3 domain.

It belongs to the endophilin family. As to quaternary structure, may form a homodimer (via the BAR domain). In terms of tissue distribution, expressed in neurons and posterior intestine.

It is found in the synapse. Its subcellular location is the cytoplasmic vesicle. It localises to the secretory vesicle. The protein localises to the synaptic vesicle. The protein resides in the membrane. Functionally, involved in synaptic vesicle (SV) recycling in neurons probably by regulating clathrin-mediated endocytosis. By controlling SV endocytosis, regulates the rate of excitatory postsynaptic currents (EPSCs) at neuromuscular junctions and thus locomotion. In a similar manner, involved in necrotic neuronal cell death induced by abnormal hyperactivation of ion channels. Plays a minor role in responses to mechanical stimuli. Plays a minor role in unc-26/synaptojanin localization to synapses. The sequence is that of Endophilin-A homolog from Caenorhabditis elegans.